We begin with the raw amino-acid sequence, 901 residues long: HTH-type transcriptional regulator MalT (901 aa).

39–46 lines the ATP pocket; it reads SPAGYGKT. In terms of domain architecture, HTH luxR-type spans 829–894; it reads ELIRTSPLTQ…DAVQHAQQLL (66 aa). The H-T-H motif DNA-binding region spans 853-872; that stretch reads NEQIAGELAVAATTIKTHIR.

It belongs to the MalT family. In terms of assembly, monomer in solution. Oligomerizes to an active state in the presence of the positive effectors ATP and maltotriose.

Activated by ATP and maltotriose, which are both required for DNA binding. Functionally, positively regulates the transcription of the maltose regulon whose gene products are responsible for uptake and catabolism of malto-oligosaccharides. Specifically binds to the promoter region of its target genes, recognizing a short DNA motif called the MalT box. The sequence is that of HTH-type transcriptional regulator MalT from Salmonella choleraesuis (strain SC-B67).